The chain runs to 220 residues: Fructose-6-phosphate aldolase (220 aa).

The Schiff-base intermediate with substrate role is filled by lysine 85.

Belongs to the transaldolase family. Type 3A subfamily. As to quaternary structure, homodecamer.

It localises to the cytoplasm. It carries out the reaction beta-D-fructose 6-phosphate = dihydroxyacetone + D-glyceraldehyde 3-phosphate. Functionally, catalyzes the reversible formation of fructose 6-phosphate from dihydroxyacetone and D-glyceraldehyde 3-phosphate via an aldolization reaction. This Salmonella schwarzengrund (strain CVM19633) protein is Fructose-6-phosphate aldolase.